Reading from the N-terminus, the 469-residue chain is MNPNQKIITIGSVSLTIATICFLMQIAILVTTVTLHFKQYECDSPANNQVMPCEPIIIERNITEIVYLTNTTIEKEICPKLVEYRNWSKPQCKITGFAPFSKDNSIRLSAGGDIWVTREPYVSCDPGKCYQFALGQGTTLDNKHSNDTIHDRTPHRTLLMNELGVPFHLGTRQVCIAWSSSSCHDGKAWLHVCVTGYDKNATASFIYDGRLVDSIGSWSQNILRTQESECVCINGTCTVVMTDGSASGRADTKILFIEEGKIVHTSPLSGSAQHVEECSCYPRYPGVRCICRDNWKGSNRPVVDINVKDYSIDSSYVCSGLVGDTPRKNDRSSSSYCRNPNNEKGTHGVKGWAFDDGNDVWMGRTISEDSRSGYETFKVIGGWSTPNSKLQINRQVIVDSNDRSGYSGIFSVEGKSCINRCFYVELIRGREQETRVWWTSNSIVVFCGTSGTYGTGSWPDGADINLMPI.

Residues 1 to 9 lie on the Intravirion side of the membrane; the sequence is MNPNQKIIT. The helical transmembrane segment at 10–30 threads the bilayer; that stretch reads IGSVSLTIATICFLMQIAILV. Residues 11 to 33 form an involved in apical transport and lipid raft association region; that stretch reads GSVSLTIATICFLMQIAILVTTV. Residues 31–469 are Virion surface-facing; it reads TTVTLHFKQY…DGADINLMPI (439 aa). Positions 36–88 are hypervariable stalk region; it reads HFKQYECDSPANNQVMPCEPIIIERNITEIVYLTNTTIEKEICPKLVEYRNWS. Asn-61, Asn-70, and Asn-86 each carry an N-linked (GlcNAc...) asparagine; by host glycan. The head of neuraminidase stretch occupies residues 91–469; it reads QCKITGFAPF…DGADINLMPI (379 aa). 8 cysteine pairs are disulfide-bonded: Cys-92–Cys-417, Cys-124–Cys-129, Cys-183–Cys-230, Cys-232–Cys-237, Cys-278–Cys-291, Cys-280–Cys-289, Cys-318–Cys-337, and Cys-421–Cys-447. A substrate-binding site is contributed by Arg-118. A glycan (N-linked (GlcNAc...) asparagine; by host) is linked at Asn-146. The Proton donor/acceptor role is filled by Asp-151. Residue Arg-152 coordinates substrate. Asn-200 and Asn-234 each carry an N-linked (GlcNAc...) asparagine; by host glycan. Substrate is bound at residue 276–277; that stretch reads EE. Arg-292 is a substrate binding site. The Ca(2+) site is built by Asp-293, Gly-297, and Asp-324. Arg-371 is a binding site for substrate. Catalysis depends on Tyr-406, which acts as the Nucleophile.

This sequence belongs to the glycosyl hydrolase 34 family. In terms of assembly, homotetramer. Ca(2+) serves as cofactor. In terms of processing, N-glycosylated.

The protein resides in the virion membrane. Its subcellular location is the host apical cell membrane. The enzyme catalyses Hydrolysis of alpha-(2-&gt;3)-, alpha-(2-&gt;6)-, alpha-(2-&gt;8)- glycosidic linkages of terminal sialic acid residues in oligosaccharides, glycoproteins, glycolipids, colominic acid and synthetic substrates.. With respect to regulation, inhibited by the neuraminidase inhibitors zanamivir (Relenza) and oseltamivir (Tamiflu). These drugs interfere with the release of progeny virus from infected cells and are effective against all influenza strains. Resistance to neuraminidase inhibitors is quite rare. Catalyzes the removal of terminal sialic acid residues from viral and cellular glycoconjugates. Cleaves off the terminal sialic acids on the glycosylated HA during virus budding to facilitate virus release. Additionally helps virus spread through the circulation by further removing sialic acids from the cell surface. These cleavages prevent self-aggregation and ensure the efficient spread of the progeny virus from cell to cell. Otherwise, infection would be limited to one round of replication. Described as a receptor-destroying enzyme because it cleaves a terminal sialic acid from the cellular receptors. May facilitate viral invasion of the upper airways by cleaving the sialic acid moieties on the mucin of the airway epithelial cells. Likely to plays a role in the budding process through its association with lipid rafts during intracellular transport. May additionally display a raft-association independent effect on budding. Plays a role in the determination of host range restriction on replication and virulence. Sialidase activity in late endosome/lysosome traffic seems to enhance virus replication. This Aves (whales) protein is Neuraminidase.